Reading from the N-terminus, the 296-residue chain is Prostate androgen-regulated mucin-like protein 1 homolog (296 aa).

The first 20 residues, 1–20, serve as a signal peptide directing secretion; it reads MVCKVLIALCIFTAGLRVQG. Residues 21–244 are Extracellular-facing; sequence SPTVPLPVSL…EVENALSSGS (224 aa). N-linked (GlcNAc...) asparagine glycans are attached at residues Asn61 and Asn95. A disordered region spans residues 72 to 220; the sequence is LTSQLPTDHR…SPQDTEPGKV (149 aa). A compositionally biased stretch (basic and acidic residues) spans 78–95; sequence TDHREEAVTSPPLKRDVN. Residues 96 to 110 show a composition bias toward polar residues; sequence STDSSPAGFPSTSSD. Residues 139 to 167 are compositionally biased toward low complexity; the sequence is LLSSQAPTSATTSPATSLSESLSASVTSS. The segment covering 168-177 has biased composition (polar residues); that stretch reads HNSTVANIQP. Asn169 carries N-linked (GlcNAc...) asparagine glycosylation. Residues 206–217 are compositionally biased toward basic and acidic residues; sequence VPKEKSPQDTEP. Residues 245–265 traverse the membrane as a helical segment; that stretch reads IAAITVTVIAVVLLVFGGAAY. At 266-296 the chain is on the cytoplasmic side; sequence LKIRHSSYGRLLDDHDYGSWGNYNNPLYDDS. Ser284 bears the Phosphoserine mark.

This sequence belongs to the PARM family. Post-translationally, highly N-glycosylated and O-glycosylated.

Its subcellular location is the cell membrane. It is found in the golgi apparatus membrane. It localises to the endosome membrane. Its function is as follows. May regulate TLP1 expression and telomerase activity, thus enabling certain prostatic cells to resist apoptosis. In Mus musculus (Mouse), this protein is Prostate androgen-regulated mucin-like protein 1 homolog (Parm1).